The sequence spans 193 residues: Achaete-scute homolog 2 (193 aa).

Disordered stretches follow at residues 1–27 (MDGGTLPRSAPPAPPVPVGCAARRRPA), 37–56 (RRRPATAETGGGAAAVARRN), and 118–177 (GGLR…GALS). Residues 50–102 (AAVARRNERERNRVKLVNLGFQALRQHVPHGGASKKLSKVETLRSAVEYIRAL) enclose the bHLH domain. The span at 140–150 (AASPSRASSSP) shows a compositional bias: low complexity.

In terms of assembly, efficient DNA binding requires dimerization with another basic helix-loop-helix (bHLH) protein. Forms heterodimers with bHLH transcription factor TCF3. May not heterodimerise with bHLH protein HAND1. Expressed in the placenta at a stage between the first and second trimesters and when it matures, at about 32-36 weeks. Expressed in the extravillous trophoblasts, the intermediate trophoblasts, and at lower levels in the cytotrophoblasts and stroma of chorionic villi of the developing placenta. Expressed in follicular T-helper (Tfh) cells.

The protein localises to the nucleus. Transcription factor. Binds to E-box motifs 5'-CANNTG-3' in the regulatory elements of target genes, probably as a heterodimer with another basic helix-loop-helix (bHLH) protein such as the transcription factor TCF3. May bind both open and closed chromatin, acting as a pioneer transcription factor to allow other factors to bind and activate lineage-specific genes. Required during post-implantation development for the generation of some differentiated trophoblast cell types. Transcriptional activity of ASCL2 may be antagonised in a subset of trophoblast cells by bHLH transcription factor HAND1, perhaps by competing for dimerization with other bHLH proteins. Involved in differentiation and function of follicular T-helper (Tfh) cells, thereby playing a role in germinal center responses; probably modulates expression of genes involved in Tfh cell function, such as BCL6. May also act as a suppressor of Th1-, Th2- and Th17-cell differentiation. Induces the formation of stem cells in intestinal crypts in vitro, synergistically activating transcription of target genes, such as SOX9, together with TCF4/beta-catenin. May form a bistable transcriptional switch, controlling expression of its own gene together with Wnt/R-spondin signaling, and thereby maintaining stem cell characteristics. Modulates expression of target genes, including perhaps down-regulating EGR1/Krox24 and chemokine CXCL10/Mob-1 and up-regulating CXCR4 and CDKN1C/p57kip2, in Schwann cells. May play a role in reducing proliferation of Schwann cells, perhaps acting via modulation of expression of CDKN1C. May be dispensable for blastocyst formation and later embryonic function. May be involved in the determination of neuronal precursors. This is Achaete-scute homolog 2 (ASCL2) from Homo sapiens (Human).